Here is a 397-residue protein sequence, read N- to C-terminus: MALNFNAIASKSQKLPCFALPPKATLRSPKFSMISTIPSGSKEVGNLKKPFTPPKEVPVQITHSMPPHKIEIFKSLEGWAENNILTHLKPVEKCWQPADFLPDPNSDGFHEQVKELRERAKEIPDDYFVVLVGDMITEEALSTYQTMLNTLDGTRDETGASLTPWAIWTRAWTAEENRHGDLLNKYLYLSGRVDMRQIERTIQYLIGSGMDPHTENSPYRGFIYTSFQERATFISHGNTGRLAKEYGDINLAQICGSIASDEKRHETAYTKIVEKLFEIDPDETVLAFADMMKKKIAMPAEFIYDGRDYNLFDHYSAVAQRIGVYTAKDYVDIVEHLVDRWKVKELAGLSAEGRKAQDYLCSLPSRIRRLEERAQEKAQGSTPVSPFSWIFDREVKL.

The N-terminal 33 residues, 1-33, are a transit peptide targeting the chloroplast; the sequence is MALNFNAIASKSQKLPCFALPPKATLRSPKFSM. Positions 138, 176, 179, 229, 262, and 265 each coordinate Fe cation.

This sequence belongs to the fatty acid desaturase type 2 family. In terms of assembly, homodimer. The cofactor is Fe(2+).

Its subcellular location is the plastid. It is found in the chloroplast. The enzyme catalyses octadecanoyl-[ACP] + 2 reduced [2Fe-2S]-[ferredoxin] + O2 + 2 H(+) = (9Z)-octadecenoyl-[ACP] + 2 oxidized [2Fe-2S]-[ferredoxin] + 2 H2O. It participates in lipid metabolism; fatty acid metabolism. Converts stearoyl-ACP to oleoyl-ACP by introduction of a cis double bond between carbons 9 and 10 of the acyl chain. The protein is Stearoyl-[acyl-carrier-protein] 9-desaturase, chloroplastic of Gossypium hirsutum (Upland cotton).